A 1411-amino-acid chain; its full sequence is Zinc finger protein 609 (1411 aa).

Disordered stretches follow at residues 1 to 26, 47 to 190, 353 to 484, 517 to 659, 679 to 963, 1005 to 1125, 1153 to 1221, and 1270 to 1367; these read MSLS…SGDE, QKLE…QPVP, PRFC…EPTV, AHAH…ARPI, ASPG…VIQQ, YEEQ…RQAE, KSED…LTQH, and GSKV…STHH. Phosphoserine is present on residues S358, S361, and S379. Residues 377-401 are compositionally biased toward polar residues; that stretch reads PNSNTPVNETATASDSKGTSNSSKT. T381 is modified (phosphothreonine). Residues S413, S433, S446, S452, S467, and S470 each carry the phosphoserine modification. Residues 423–437 show a composition bias toward polar residues; it reads ASSTSEDVKASPSSA. A Glycyl lysine isopeptide (Lys-Gly) (interchain with G-Cter in SUMO2) cross-link involves residue K479. The segment at 495–520 adopts a C2H2-type zinc-finger fold; that stretch reads IDCPHPNCNKKYKHINGLKYHQAHAH. Basic and acidic residues predominate over residues 519–529; sequence AHTDDDSKPEA. S533 is modified (phosphoserine). The segment covering 549–563 has biased composition (polar residues); that stretch reads NGASVSQKGSLSPAR. Phosphoserine is present on residues S576 and S578. Over residues 626–649 the composition is skewed to basic and acidic residues; the sequence is SLERKCMEKEKCKKPSSLKPEKIP. The span at 679–700 shows a compositional bias: polar residues; that stretch reads ASPGSSSGLTATVAQAMPNSPQ. Over residues 726 to 736 the composition is skewed to basic residues; it reads DKKKKDKKKKE. A Phosphoserine modification is found at S743. The residue at position 746 (T746) is a Phosphothreonine. Basic and acidic residues predominate over residues 751–764; sequence CRAEEGKSPFRESS. The residue at position 758 (S758) is a Phosphoserine. A Glycyl lysine isopeptide (Lys-Gly) (interchain with G-Cter in SUMO2) cross-link involves residue K789. Polar residues predominate over residues 798–844; the sequence is FTDNAPSPSIGGSSRLENTTPTQPLTPLHVVTQNGAEASSVKTNSPA. Residue S804 is modified to Phosphoserine. Phosphothreonine is present on T823. A phosphoserine mark is found at S842, S846, and S849. A compositionally biased stretch (basic and acidic residues) spans 855–876; the sequence is GEGKVDSVKSKDAEQLVKEGAK. Positions 897 to 908 are enriched in low complexity; that stretch reads SYYSPSYAQSSP. Positions 926-950 are enriched in basic and acidic residues; that stretch reads TKRDEEPESIEGKVKNDICEEKKPE. Low complexity predominate over residues 952-963; the sequence is SSSSQQPSVIQQ. Positions 1020-1042 are enriched in basic and acidic residues; that stretch reads GVDKKAEMGLKEREAALKEEWKQ. At S1055 the chain carries Phosphoserine. A Glycyl lysine isopeptide (Lys-Gly) (interchain with G-Cter in SUMO2) cross-link involves residue K1061. Composition is skewed to basic and acidic residues over residues 1097 to 1113, 1153 to 1187, and 1195 to 1208; these read LKVK…EASE, KSED…KEST, and TSEE…EPRP. A Glycyl lysine isopeptide (Lys-Gly) (interchain with G-Cter in SUMO2) cross-link involves residue K1153. Residues 1286–1296 are compositionally biased toward polar residues; sequence PSVTCKSSSES. K1297 participates in a covalent cross-link: Glycyl lysine isopeptide (Lys-Gly) (interchain with G-Cter in SUMO2). Positions 1328-1337 are enriched in gly residues; the sequence is GCGVVGGGGS.

As to quaternary structure, interacts (via N-terminus) with NIPBL. Interacts with INTS13; promoting association with the integrator complex. In terms of tissue distribution, isoform 1: Expressed in myoblasts and myotubes. Isoform 2: Expressed in myoblasts and myotubes, with a preference in undifferentiated myoblasts.

The protein localises to the nucleus. Transcription factor, which activates RAG1, and possibly RAG2, transcription. Through the regulation of RAG1/2 expression, may regulate thymocyte maturation. Along with NIPBL and the multiprotein complex Integrator, promotes cortical neuron migration during brain development by regulating the transcription of crucial genes in this process. Preferentially binds promoters containing paused RNA polymerase II. Up-regulates the expression of SEMA3A, NRP1, PLXND1 and GABBR2 genes, among others. In terms of biological role, involved in the regulation of myoblast proliferation during myogenesis. The polypeptide is Zinc finger protein 609 (Homo sapiens (Human)).